The following is an 80-amino-acid chain: Acyl carrier protein (80 aa).

Positions 2 to 77 (KNIEERIKKI…KSIDFIQNKN (76 aa)) constitute a Carrier domain. O-(pantetheine 4'-phosphoryl)serine is present on Ser-37.

It belongs to the acyl carrier protein (ACP) family. In terms of processing, 4'-phosphopantetheine is transferred from CoA to a specific serine of apo-ACP by AcpS. This modification is essential for activity because fatty acids are bound in thioester linkage to the sulfhydryl of the prosthetic group.

The protein localises to the cytoplasm. Its pathway is lipid metabolism; fatty acid biosynthesis. Carrier of the growing fatty acid chain in fatty acid biosynthesis. The chain is Acyl carrier protein from Buchnera aphidicola subsp. Acyrthosiphon pisum (strain 5A).